A 366-amino-acid chain; its full sequence is N-acetyl-L-citrulline deacetylase (366 aa).

Residues His-72 and Asp-103 each coordinate Co(2+). Glu-130 acts as the Proton donor/acceptor in catalysis. Glu-155 lines the Co(2+) pocket.

It belongs to the peptidase M20A family. N-acetylcitrulline deacetylase subfamily. Forms homodimers in the crystal, but higher order oligomers may form in solution. Requires Co(2+) as cofactor.

It carries out the reaction N(2)-acetyl-L-citrulline + H2O = L-citrulline + acetate. The catalysed reaction is N(2)-acetyl-L-ornithine + H2O = L-ornithine + acetate. It functions in the pathway amino-acid biosynthesis; L-arginine biosynthesis. Catalyzes the deacetylation of N-acetyl-L-citrulline to produce L-citrulline. This is a step in an alternative arginine biosynthesis pathway. Is also able to catalyze the deacetylation of N-acetylornithine in vitro, with almost equal velocity. However, this reaction may be not relevant in vivo since Xanthomonas does not possess the canonical argF gene and cannot convert ornithine to citrulline via ArgF'. The protein is N-acetyl-L-citrulline deacetylase of Xanthomonas campestris pv. campestris (strain ATCC 33913 / DSM 3586 / NCPPB 528 / LMG 568 / P 25).